Here is a 435-residue protein sequence, read N- to C-terminus: 3-phosphoshikimate 1-carboxyvinyltransferase (435 aa).

Lysine 25, serine 26, and arginine 30 together coordinate 3-phosphoshikimate. Lysine 25 lines the phosphoenolpyruvate pocket. 2 residues coordinate phosphoenolpyruvate: glycine 99 and arginine 130. 3-phosphoshikimate contacts are provided by serine 176, serine 177, glutamine 178, serine 204, aspartate 319, asparagine 342, and lysine 346. Phosphoenolpyruvate is bound at residue glutamine 178. Residue aspartate 319 is the Proton acceptor of the active site. Phosphoenolpyruvate-binding residues include arginine 350, arginine 394, and lysine 419.

The protein belongs to the EPSP synthase family. As to quaternary structure, monomer.

The protein resides in the cytoplasm. It carries out the reaction 3-phosphoshikimate + phosphoenolpyruvate = 5-O-(1-carboxyvinyl)-3-phosphoshikimate + phosphate. It participates in metabolic intermediate biosynthesis; chorismate biosynthesis; chorismate from D-erythrose 4-phosphate and phosphoenolpyruvate: step 6/7. Its function is as follows. Catalyzes the transfer of the enolpyruvyl moiety of phosphoenolpyruvate (PEP) to the 5-hydroxyl of shikimate-3-phosphate (S3P) to produce enolpyruvyl shikimate-3-phosphate and inorganic phosphate. This chain is 3-phosphoshikimate 1-carboxyvinyltransferase, found in Haemophilus ducreyi (strain 35000HP / ATCC 700724).